The following is a 139-amino-acid chain: Actin-depolymerizing factor 7 (139 aa).

An ADF-H domain is found at 7–139 (GMAVDDECKL…GLDVIRGRAN (133 aa)).

Belongs to the actin-binding proteins ADF family.

Functionally, actin-depolymerizing protein. Severs actin filaments (F-actin) and binds to actin monomers. This chain is Actin-depolymerizing factor 7 (ADF7), found in Oryza sativa subsp. japonica (Rice).